The following is a 451-amino-acid chain: Rab GDP-dissociation inhibitor (451 aa).

Interaction with YPT1 stretches follow at residues 106 to 112 (RYVDFKQ) and 234 to 259 (YPMY…TYML).

This sequence belongs to the Rab GDI family. As to quaternary structure, interacts with the GDP-bound form of Rab GTPase YPT1. Interacts with YPT10.

The protein localises to the cytoplasm. Its function is as follows. Regulates the GDP/GTP exchange reaction of SEC4 by inhibiting the dissociation of GDP from it, and the subsequent binding of GTP to SEC4. Plays an essential role in the yeast secretory pathway. Extracts GDP-bound YPT7 from vacuolar membranes, antagonizing vacuolar membrane fusion. This is Rab GDP-dissociation inhibitor (GDI1) from Saccharomyces cerevisiae (strain ATCC 204508 / S288c) (Baker's yeast).